The chain runs to 310 residues: Ribosomal RNA small subunit methyltransferase H (310 aa).

S-adenosyl-L-methionine-binding positions include 32 to 34 (AGH), Asp52, Phe79, Asp100, and Gln107.

The protein belongs to the methyltransferase superfamily. RsmH family.

The protein localises to the cytoplasm. It catalyses the reaction cytidine(1402) in 16S rRNA + S-adenosyl-L-methionine = N(4)-methylcytidine(1402) in 16S rRNA + S-adenosyl-L-homocysteine + H(+). In terms of biological role, specifically methylates the N4 position of cytidine in position 1402 (C1402) of 16S rRNA. This Halalkalibacterium halodurans (strain ATCC BAA-125 / DSM 18197 / FERM 7344 / JCM 9153 / C-125) (Bacillus halodurans) protein is Ribosomal RNA small subunit methyltransferase H.